A 96-amino-acid polypeptide reads, in one-letter code: Large ribosomal subunit protein bL28 (96 aa).

Positions 1–23 (MSRVCELSGKAPMTGNTVSHANN) are disordered.

The protein belongs to the bacterial ribosomal protein bL28 family.

The chain is Large ribosomal subunit protein bL28 from Cereibacter sphaeroides (strain ATCC 17025 / ATH 2.4.3) (Rhodobacter sphaeroides).